The sequence spans 145 residues: Protein MMF1, mitochondrial (145 aa).

The N-terminal 17 residues, 1–17, are a transit peptide targeting the mitochondrion; the sequence is MFLRNSVLRTAPVLRRG.

Belongs to the RutC family.

The protein localises to the mitochondrion matrix. In terms of biological role, plays a role in the maintenance of mitochondrial DNA. In Saccharomyces cerevisiae (strain ATCC 204508 / S288c) (Baker's yeast), this protein is Protein MMF1, mitochondrial (MMF1).